The following is a 1033-amino-acid chain: SIT4-associating protein SAP190 (1033 aa).

4 disordered regions span residues 32-82 (DQDD…TTES), 147-213 (PEII…QVET), 768-813 (FGND…HDSG), and 828-1033 (ENEE…KEAF). The span at 158–170 (ILIERDRKDKKED) shows a compositional bias: basic and acidic residues. The segment covering 171-182 (AEEGGDSEETTN) has biased composition (acidic residues). Residues 183–195 (DSDHDSGDERSVD) show a composition bias toward basic and acidic residues. Serine 774 is modified (phosphoserine). Composition is skewed to acidic residues over residues 784–793 (SEDIIGDTEG) and 828–838 (ENEEDYAEYSD). Phosphoserine is present on residues serine 857, serine 862, and serine 892. Residues 858-879 (DDGKSKSAESEFTDKISEHRDG) are compositionally biased toward basic and acidic residues. The span at 909-924 (SRSQPSDPKLQDQNIF) shows a compositional bias: polar residues. Residues 932 to 944 (GVGDDDDYMDPND) show a composition bias toward acidic residues. Threonine 990 carries the phosphothreonine modification. Serine 991 is modified (phosphoserine). Acidic residues predominate over residues 1000-1018 (ISSDEEDSEDEDEENDMGN).

Belongs to the SAPS family. As to quaternary structure, associates with the SIT4 protein phosphatase catalytic subunit in a cell-cycle-dependent manner. In terms of processing, hyperphosphorylated in the absence of SIT4.

Its subcellular location is the cytoplasm. Its function is as follows. Positive regulator of protein phosphatase SIT4. Involved in the general amino acid control (GAAC) response regulated by TOR. Involved in the dephosphorylation of the elongator complex subunit IKI3. The protein is SIT4-associating protein SAP190 (SAP190) of Saccharomyces cerevisiae (strain Lalvin EC1118 / Prise de mousse) (Baker's yeast).